We begin with the raw amino-acid sequence, 506 residues long: MSGESVIEFTGFIKACRLFRENRLAEAEAVCTNLLRKNPLDQATWALKMQCLSDSTYVDELENEDMGLAETFLDQNVIAPNARPGTSFARPKTSAKGVNPILRPTTNAGRPLSGVVRPQSSFKSGSMDQAVRTARTAKTARAVSSTSARNMRLGTASMAAGADGEFVNLARLNIDKYAADPQVNRQLFEYVFYYLNDIRVAHQIAGTASKAAGFEDYYWKNQLAKCYLRLGMLQDATKQLQSSLEQKKLIETFALLSKAYNRVDQPMAALKTYSAGLEVFPENVTMLTGMARVQEALGEYDESVKLYKRVLDAESNNIEAIACVATTYYYGGKPELAMRYYRRILQMGVSSPELFLNIGLCCMAAQQFDFALSSILRAQSTMTDDVAADVWYNIGQILVDIGDLVSAARSFRIALSHDPDHSESLVNLGILKHREGKIDEARSLYSSATSKNPYMFEGNYNLGLVSFTQGKYHECRELIEKALAAFPEHEHCKKILNHLKPLYESI.

The interval 83–112 (RPGTSFARPKTSAKGVNPILRPTTNAGRPL) is disordered. TPR repeat units lie at residues 217-250 (YYWKNQLAKCYLRLGMLQDATKQLQSSLEQKKLI), 251-283 (ETFALLSKAYNRVDQPMAALKTYSAGLEVFPEN), 284-317 (VTMLTGMARVQEALGEYDESVKLYKRVLDAESNN), 319-351 (EAIACVATTYYYGGKPELAMRYYRRILQMGVSS), 353-385 (ELFLNIGLCCMAAQQFDFALSSILRAQSTMTDD), 388-421 (ADVWYNIGQILVDIGDLVSAARSFRIALSHDPDH), 423-455 (ESLVNLGILKHREGKIDEARSLYSSATSKNPYM), and 456-489 (FEGNYNLGLVSFTQGKYHECRELIEKALAAFPEH).

As to quaternary structure, part of BBSome complex, that contains at least bbs-1, bbs-2, bbs-4, bbs-5, osm-12, bbs-8/ttc-8 and bbs-9. As to expression, expressed in head and tail neurons. Expressed in ciliated male tail-neurons. Expressed in thermosensory and CO(2) sensory AFD neurons.

It is found in the cell projection. Its subcellular location is the cilium. The protein resides in the cytoplasm. It localises to the cytoskeleton. The protein localises to the cilium basal body. It is found in the cilium axoneme. Functionally, component of the BBSome complex. The BBSome complex is thought to function as a coat complex required for sorting of specific membrane proteins to the primary cilia. The BBSome complex is required for ciliogenesis but is dispensable for centriolar satellite function. Required for proper BBSome complex assembly and its ciliary localization. Required for cilia biogenesis and both the assembly and movement of intraflagellar transport proteins along the ciliary axoneme. Plays a role in guanylyl cyclase localization in the ring-like structures at the base of the finger compartment in AFD sensory neurons. In Caenorhabditis elegans, this protein is Tetratricopeptide repeat protein 8.